Reading from the N-terminus, the 1093-residue chain is NACHT, LRR and PYD domains-containing protein 14 (1093 aa).

Positions 1 to 97 (MADSSSSSFF…CERAKEEINW (97 aa)) constitute a Pyrin domain. The tract at residues 102-121 (IGPDDAKAGETQEDQEAVLG) is disordered. Residues 177-499 (QIVVLQGAAG…MFYMLKGSWE (323 aa)) enclose the NACHT domain. 183–190 (GAAGVGKT) contacts ATP. LRR repeat units follow at residues 730–750 (NLMH…KSLC), 759–780 (KLQT…NISN), 787–807 (SLIF…QLLC), 816–836 (YLER…EYLS), 844–864 (RLTH…KLMS), 873–894 (TLKS…YLST), 901–921 (SLTH…KLLC), 930–951 (NLQD…DLAS), 958–978 (NLRS…KILC), 987–1008 (NIQR…DLSS), and 1015–1035 (RLIK…VKLY).

Belongs to the NLRP family. As to expression, testis-specific.

The protein resides in the cytoplasm. May be involved in inflammation and spermatogenesis. This Homo sapiens (Human) protein is NACHT, LRR and PYD domains-containing protein 14 (NLRP14).